Here is a 255-residue protein sequence, read N- to C-terminus: MPLELVTVPCLSDNYAFLVHDAGTGETSVVDVPEAGPVLKALEERGWHLSQILLTHHHSDHVAGVEELRAATGARVAGAAADAHRLPPLDLELAEGDLVRVGASEGRVIEVPGHTVGHIAFHFPDSSLAFTGDSLMAMGCGRLFEGTAEAMWQSLRKLSALPPETMICSGHEYAASNARFAATLEPDSPMLIFRVGSIAAARKEGRPTVPSHLSDEIATNPFLRAGEASLKAAVGMVDAEDAEVFAEIRRRKDKF.

Zn(2+) contacts are provided by His-56, His-58, Asp-60, His-61, His-114, Asp-133, and His-171.

Belongs to the metallo-beta-lactamase superfamily. Glyoxalase II family. In terms of assembly, monomer. Zn(2+) serves as cofactor.

The catalysed reaction is an S-(2-hydroxyacyl)glutathione + H2O = a 2-hydroxy carboxylate + glutathione + H(+). It functions in the pathway secondary metabolite metabolism; methylglyoxal degradation; (R)-lactate from methylglyoxal: step 2/2. In terms of biological role, thiolesterase that catalyzes the hydrolysis of S-D-lactoyl-glutathione to form glutathione and D-lactic acid. In Cereibacter sphaeroides (strain ATCC 17029 / ATH 2.4.9) (Rhodobacter sphaeroides), this protein is Hydroxyacylglutathione hydrolase.